A 435-amino-acid polypeptide reads, in one-letter code: Glutamyl-tRNA reductase (435 aa).

Substrate contacts are provided by residues 49-52 (TCNR), Ser-118, 123-125 (EPQ), and Gln-129. Cys-50 functions as the Nucleophile in the catalytic mechanism. 203-208 (GAGETI) is an NADP(+) binding site.

The protein belongs to the glutamyl-tRNA reductase family. As to quaternary structure, homodimer.

It carries out the reaction (S)-4-amino-5-oxopentanoate + tRNA(Glu) + NADP(+) = L-glutamyl-tRNA(Glu) + NADPH + H(+). It functions in the pathway porphyrin-containing compound metabolism; protoporphyrin-IX biosynthesis; 5-aminolevulinate from L-glutamyl-tRNA(Glu): step 1/2. Catalyzes the NADPH-dependent reduction of glutamyl-tRNA(Glu) to glutamate 1-semialdehyde (GSA). This Glaesserella parasuis serovar 5 (strain SH0165) (Haemophilus parasuis) protein is Glutamyl-tRNA reductase.